A 953-amino-acid polypeptide reads, in one-letter code: Nonsense-mediated mRNA decay factor SMG8 (953 aa).

Disordered stretches follow at residues 571-604 (AEDAELDPDEEDEELPTGEREEQHITQSNGCSQP) and 629-653 (PCFDQSSSSEAESTCSGTSSEESNT). Over residues 573-586 (DAELDPDEEDEELP) the composition is skewed to acidic residues. The span at 595 to 604 (ITQSNGCSQP) shows a compositional bias: polar residues. Residues 634 to 653 (SSSSEAESTCSGTSSEESNT) show a composition bias toward low complexity.

This sequence belongs to the SMG8 family.

Functionally, involved in nonsense-mediated decay (NMD) of mRNAs containing premature stop codons. Probable component of kinase complex containing nonC and recruited to stalled ribosomes. This is Nonsense-mediated mRNA decay factor SMG8 from Drosophila pseudoobscura pseudoobscura (Fruit fly).